A 3084-amino-acid polypeptide reads, in one-letter code: Highly reducing polyketide synthase sdnO (3084 aa).

In terms of domain architecture, Ketosynthase family 3 (KS3) spans 4-430; sequence PIPLAVVGIA…GTNAHAVLEK (427 aa). Residues C178, H313, and H353 each act as for beta-ketoacyl synthase activity in the active site. The interval 541-841 is malonyl-CoA:ACP transacylase (MAT) domain; it reads FIFTGQGAQW…LAGPLRQSVA (301 aa). S632 (for malonyltransferase activity) is an active-site residue. The tract at residues 931–1071 is N-terminal hotdog fold; the sequence is HDLLGLRMTD…GSVLIDLVSS (141 aa). The dehydratase (DH) domain stretch occupies residues 931 to 1243; sequence HDLLGLRMTD…RSAEADMLVF (313 aa). The region spanning 931-1275 is the PKS/mFAS DH domain; it reads HDLLGLRMTD…LRSLAALDGA (345 aa). H963 acts as the Proton acceptor; for dehydratase activity in catalysis. The interval 1099 to 1275 is C-terminal hotdog fold; that stretch reads LQPGEDIPPS…LRSLAALDGA (177 aa). The active-site Proton donor; for dehydratase activity is the D1177. Residues 1733 to 2045 form an enoylreductase (ER) domain region; it reads GTAHAATFVE…RHENMTKYVV (313 aa). The interval 2069 to 2252 is catalytic ketoreductase (KRc) domain; sequence ATYVVAGGLG…YMALNIGLIE (184 aa). The region spanning 2363 to 2440 is the Carrier domain; the sequence is DIEAFAARAI…ALARKVTLRS (78 aa). An O-(pantetheine 4'-phosphoryl)serine modification is found at S2400. The interval 2445-2501 is disordered; sequence GGAGGDASSTGNSESMARTPSDSSTVPTSIPATPSRSPSREPPAKETLTKSQQHLPI. The span at 2456 to 2481 shows a compositional bias: polar residues; it reads NSESMARTPSDSSTVPTSIPATPSRS. The span at 2482–2492 shows a compositional bias: basic and acidic residues; sequence PSREPPAKETL. The interval 2864-3084 is choline/carnitine acyltransferase domain; the sequence is HFYSQLNRAF…LGVVRRVVEG (221 aa).

The protein operates within antibiotic biosynthesis. Highly reducing polyketide synthase; part of the gene cluster that mediates the biosynthesis of sordarin and hypoxysordarin, glycoside antibiotics with a unique tetracyclic diterpene aglycone structure. First, the geranylgeranyl diphosphate synthase sdnC constructs GGDP from farnesyl diphosphate and isopentenyl diphosphate. The diterpene cyclase sdnA then catalyzes the cyclization of GGDP to afford cycloaraneosene. Cycloaraneosene is then hydroxylated four times by the putative cytochrome P450 monooxygenases sdnB, sdnE, sdnF and sdnH to give a hydroxylated cycloaraneosene derivative such as cycloaraneosene-8,9,13,19-tetraol. Although the order of the hydroxylations is unclear, at least C8, C9 and C13 of the cycloaraneosene skeleton are hydroxylated before the sordaricin formation. Dehydration of the 13-hydroxy group of the hydroxylated cycloaraneosene derivative might be catalyzed by an unassigned hypothetical protein such as sdnG and sdnP to construct the cyclopentadiene moiety. The FAD-dependent oxidoreductase sdnN is proposed to catalyze the oxidation at C9 of the hydroxylated cycloaraneosene derivative and also catalyze the Baeyer-Villiger oxidation to give the lactone intermediate. The presumed lactone intermediate would be hydrolyzed to give an acrolein moiety and a carboxylate moiety. Then, [4+2]cycloaddition would occur between the acrolein moiety and the cyclopentadiene moiety to give sordaricin. SdnN might also be involved in the [4+2]cycloaddition after the hypothesized oxidation to accommodate the oxidized product and prompt the [4+2]cycloaddition. GDP-6-deoxy-D-altrose may be biosynthesized from GDP-D-mannose by the putative GDP-mannose-4,6-dehydratase sdnI and the short-chain dehydrogenase sdnK. The glycosyltransferase sdnJ catalyzes the attachment of 6-deoxy-D-altrose onto the 19-hydroxy group of sordaricin to give 4'-O-demethylsordarin. The methyltransferase sdnD would complete the biosynthesis of sordarin. Sordarin can be further modified into hypoxysordarin. The unique acyl chain at the 3'-hydroxy group of hypoxysordarin would be constructed by an iterative type I PKS sdnO and the trans-acting polyketide methyltransferase sdnL. SdnL would be responsible for the introduction of an alpha-methyl group of the polyketide chain. Alternatively, the putative beta-lactamase-like sdnR might be responsible for the cleavage and transfer of the polyketide chain from the PKS sdnO to sordarin. Two putative cytochrome P450 monooxygenases, sdnQ and sdnT, might catalyze the epoxidations of the polyketide chain to complete the biosynthesis of hypoxysordarin. Transcriptional regulators sdnM and sdnS are presumably encoded for the transcriptional regulation of the expression of the sdn gene cluster. In Sordaria araneosa (Pleurage araneosa), this protein is Highly reducing polyketide synthase sdnO.